Consider the following 106-residue polypeptide: MNKIRKGDEVIVIAGRDKGKRGTVSLRKDDSHVLVDGINLVKKHTKPNPLKGTTGGIVEKSMPIHQSNVAIFNAATGKADRVGIKLLADGKKVRVFKSSGDEIKAA.

This sequence belongs to the universal ribosomal protein uL24 family. Part of the 50S ribosomal subunit.

Its function is as follows. One of two assembly initiator proteins, it binds directly to the 5'-end of the 23S rRNA, where it nucleates assembly of the 50S subunit. In terms of biological role, one of the proteins that surrounds the polypeptide exit tunnel on the outside of the subunit. The protein is Large ribosomal subunit protein uL24 of Polaromonas sp. (strain JS666 / ATCC BAA-500).